The primary structure comprises 1280 residues: MQLFPLLFSLLLTSTPGSWARNVRRQSDTWGTWGEWSPCSRTCGGGISFRERPCYSQRRDGGTSCVGPARSHRTCHTESCPDGVRDFRAEQCAEFDGTDFQGRRYRWLPYYAAPNKCELNCIPKGQNFYYKHKDAVVDGTPCEPGQRDICVDGVCRVVGCDHKLDSIKQEDKCLQCGGDGSSCYPVTGTFDGNDLSRGYNQIFIIPAGATSIRIEEAAASRNFLAVKSIRGEYYLNGHWTIEAAQALPVASTVLQYERGVEGDLAPERLQARGPTSEPLVIELLSQESNPGVHYEYYLPANDPGRGFSWSHGSWGDCSAECGGGHQSRLVFCTIDNEAYPDHMCQHQPRPTHRRSCNTQPCPKTKRWKVGPWTPCSVSCGGGVQSRSVYCISSDGTGGQEAAEETQCAGLVGKPPTTQACNLQHCAVWSVEPWGECSVTCGTGIRKRSVTCRGDEGSPVHAAACLLKDQPTLTEPCVQEACPVFRGQAWHVGSWSLCSKSCGSGIRRRQVVCTIGPPGRCVDLQSSKPAEMEACNRQPCHLPQEVPSIQDPRTRSSDPRMLSGPRVSPVSDGREQQWAPLERPRAQSNPREGQDPNLSSAGRAPTLQRPPHQPPLRPSSGPRDCRHSPHGCCPDGHTPSLGPQWQGCPLAGASCLQSRYGCCPDGVSAAEGPQQAGCTRSHGSDNTGNRPGSRAVASKNPKIHQPQAHEGEPSECRSSRFGCCYDNVASAAGPLGEGCVGQPSYAYPVRCLLPSAQGSCGDWAARWYFVASVGRCNRFWYGGCHGNANNFASEQECMNTCRGQHGPRRPEAGAAGHRAHVDGGQRGPGGQQEPDWHRAGATIPRLPSPSGSPWRREQEPAPGEPPHIPAYGNRPGGQEIRPRVPGLDREARPAVPPTHSPSYRIRLAGSEPSLVQAAPGQAVQLFCPGNIPSEFQAGWQKEGRPISSNRYQLQADGSLIISRLRPEDAGIYSCGSHRPGHEPQEIQLRVTGGDMAVFPEGQPRHFPEPRNPDLGHGPPHRGTGAEAGGHRVLSPSHPRPATRLRLDRTQPGVVDASPGQRIRLTCRAEGFPVPTIEWQRDGQLVSSPRHQVQPDGSLVISRVDVEDGGYYSCVAFNGQDRDQRWVQLRVLRELTITGLPPAVTVAEGDTARLLCVVAGESVNIRWSRNGLPIQADGHRVHQSPDGTLLIHNLRPRDEGSYTCSAFRGSQAVSRSTEVKVALPAPAAQSRDLGKDCIDQPELANCALILQAQLCGNEYYSSFCCASCSRFQPNAQPVWQQG.

The first 20 residues, M1 to A20, serve as a signal peptide directing secretion. TSP type-1 domains follow at residues S27–P81, R305–P362, K363–L422, H424–P482, and R485–H540. 3 disulfide bridges follow: C39/C75, C43/C80, and C54/C65. 3 cysteine pairs are disulfide-bonded: C425–C464, C436–C476, and C440–C481. 2 disordered regions span residues L541–H626 and P672–C715. A compositionally biased stretch (polar residues) spans A585–S599. Positions Q706–C715 are enriched in basic and acidic residues. Cystine bridges form between C750–C800, C759–C783, and C775–C796. Positions C750–C800 constitute a BPTI/Kunitz inhibitor domain. Positions C800–Y902 are disordered. Positions I879 to R891 are enriched in basic and acidic residues. The region spanning P900–T990 is the Ig-like C2-type 1 domain. A disulfide bridge connects residues C926 and C973. Positions P1002–D1012 are enriched in basic and acidic residues. Positions P1002–R1042 are disordered. Ig-like C2-type domains are found at residues P1039–R1128 and L1133–K1218. Intrachain disulfides connect C1065-C1112 and C1154-C1202. Residues L1231–Q1270 form the PLAC domain.

The protein belongs to the papilin family.

Its subcellular location is the secreted. In Mus musculus (Mouse), this protein is Papilin (Papln).